The sequence spans 42 residues: Serine protease inhibitor 8 (42 aa).

The protein belongs to the protease inhibitor I3 (leguminous Kunitz-type inhibitor) family. In terms of tissue distribution, cortex of potato tuber.

Its function is as follows. Potent inhibitor of animal pancreatic trypsin (serine protease). The polypeptide is Serine protease inhibitor 8 (Solanum tuberosum (Potato)).